The sequence spans 316 residues: Retron Ec73 putative ribosyltransferase/DNA-binding protein (316 aa).

Functionally, possible ribosyltransferase/DNA-binding component of antiviral defense system retron Ec73, composed of a non-coding RNA (ncRNA) followed by this protein then a reverse transcriptase (RT). Expression of this retron confers protection against bacteriophages SECphi4, SECphi6, SECphi27 and P1. At multiplicity of infection (MOI) of 0.02 cultures grow normally when infected with SECphi4 without collapsing, at MOI 2 cultures enter growth stasis. The polypeptide is Retron Ec73 putative ribosyltransferase/DNA-binding protein (Escherichia coli).